The sequence spans 428 residues: Dihydroorotase (428 aa).

Residues His59 and His61 each contribute to the Zn(2+) site. Substrate contacts are provided by residues 61 to 63 (HFR) and Asn93. Zn(2+)-binding residues include Asp151, His178, and His231. Substrate is bound at residue Asn277. Residue Asp304 participates in Zn(2+) binding. Asp304 is a catalytic residue. Residues His308 and 322 to 323 (FG) contribute to the substrate site.

Belongs to the metallo-dependent hydrolases superfamily. DHOase family. Class I DHOase subfamily. It depends on Zn(2+) as a cofactor.

It carries out the reaction (S)-dihydroorotate + H2O = N-carbamoyl-L-aspartate + H(+). The protein operates within pyrimidine metabolism; UMP biosynthesis via de novo pathway; (S)-dihydroorotate from bicarbonate: step 3/3. Catalyzes the reversible cyclization of carbamoyl aspartate to dihydroorotate. The polypeptide is Dihydroorotase (Bacillus licheniformis (strain ATCC 14580 / DSM 13 / JCM 2505 / CCUG 7422 / NBRC 12200 / NCIMB 9375 / NCTC 10341 / NRRL NRS-1264 / Gibson 46)).